We begin with the raw amino-acid sequence, 48 residues long: Ribulose bisphosphate carboxylase large chain (48 aa).

The protein belongs to the RuBisCO large chain family. Type I subfamily. Heterohexadecamer of 8 large chains and 8 small chains.

The protein resides in the plastid. It is found in the chloroplast. It carries out the reaction 2 (2R)-3-phosphoglycerate + 2 H(+) = D-ribulose 1,5-bisphosphate + CO2 + H2O. It catalyses the reaction D-ribulose 1,5-bisphosphate + O2 = 2-phosphoglycolate + (2R)-3-phosphoglycerate + 2 H(+). Functionally, ruBisCO catalyzes two reactions: the carboxylation of D-ribulose 1,5-bisphosphate, the primary event in carbon dioxide fixation, as well as the oxidative fragmentation of the pentose substrate in the photorespiration process. Both reactions occur simultaneously and in competition at the same active site. The polypeptide is Ribulose bisphosphate carboxylase large chain (rbcL) (Pinus pinaster (Maritime pine)).